The chain runs to 177 residues: Peroxiredoxin-2 (177 aa).

An N-acetylalanine modification is found at Ala-2. A Thioredoxin domain is found at 6–164; that stretch reads ARIGKPAPDF…ALRLVQAFQY (159 aa). Cys-51 acts as the Cysteine sulfenic acid (-SOH) intermediate in catalysis. Ser-112 is subject to Phosphoserine.

This sequence belongs to the peroxiredoxin family. AhpC/Prx1 subfamily. Homodimer; disulfide-linked, upon oxidation. 5 homodimers assemble to form a ring-like decamer. Interacts with TIPIN. The enzyme can be inactivated by further oxidation of the cysteine sulfenic acid (C(P)-SOH) to sulphinic acid (C(P)-SO2H) instead of its condensation to a disulfide bond. It can be reactivated by forming a transient disulfide bond with sulfiredoxin SRXN1, which reduces the cysteine sulfinic acid in an ATP- and Mg-dependent manner. Post-translationally, acetylation increases resistance to transition to high molecular-mass complexes. Deacetylated by HDAC6 which decreases reducing activity.

Its subcellular location is the cytoplasm. The enzyme catalyses a hydroperoxide + [thioredoxin]-dithiol = an alcohol + [thioredoxin]-disulfide + H2O. Functionally, thiol-specific peroxidase that catalyzes the reduction of hydrogen peroxide and organic hydroperoxides to water and alcohols, respectively. Plays a role in cell protection against oxidative stress by detoxifying peroxides and as sensor of hydrogen peroxide-mediated signaling events. Might participate in the signaling cascades of growth factors and tumor necrosis factor-alpha by regulating the intracellular concentrations of H(2)O(2). The polypeptide is Peroxiredoxin-2 (PRDX2) (Pongo abelii (Sumatran orangutan)).